Reading from the N-terminus, the 215-residue chain is Peroxiredoxin-5, mitochondrial (215 aa).

Residues 1-53 (MGLAGVCVLRRSAGYILGGAAGQSVAATAAARRRSEGGWASGGVRSFSRAAAA) constitute a mitochondrion transit peptide. The region spanning 57-215 (IKVGDAIPAV…SLAPSIISQL (159 aa)) is the Thioredoxin domain. N6-acetyllysine is present on lysine 76. At lysine 84 the chain carries N6-acetyllysine; alternate. Lysine 84 bears the N6-succinyllysine; alternate mark. Cysteine 101 acts as the Cysteine sulfenic acid (-SOH) intermediate in catalysis. The S-palmitoyl cysteine moiety is linked to residue cysteine 101. A disulfide bond links cysteine 101 and cysteine 205. Lysine 117 is subject to N6-succinyllysine. Serine 172 and serine 183 each carry phosphoserine. The Microbody targeting signal signature appears at 213-215 (SQL).

This sequence belongs to the peroxiredoxin family. Prx5 subfamily. Monomer. S-palmitoylated. Palmitoylation occurs on the active site, inhibiting its reactivity; therefore PRDX5 palmitoylation status determines its antioxidant capacity. Post-translationally, S-palmitoylated. Depalmitoylated by ABHD10.

It is found in the mitochondrion. Its subcellular location is the cytoplasm. The protein localises to the peroxisome matrix. The enzyme catalyses a hydroperoxide + [thioredoxin]-dithiol = an alcohol + [thioredoxin]-disulfide + H2O. In terms of biological role, thiol-specific peroxidase that catalyzes the reduction of hydrogen peroxide and organic hydroperoxides to water and alcohols, respectively. Plays a role in cell protection against oxidative stress by detoxifying peroxides and as sensor of hydrogen peroxide-mediated signaling events. The sequence is that of Peroxiredoxin-5, mitochondrial (PRDX5) from Papio hamadryas (Hamadryas baboon).